The sequence spans 177 residues: Large ribosomal subunit protein uL6 (177 aa).

The protein belongs to the universal ribosomal protein uL6 family. As to quaternary structure, part of the 50S ribosomal subunit.

In terms of biological role, this protein binds to the 23S rRNA, and is important in its secondary structure. It is located near the subunit interface in the base of the L7/L12 stalk, and near the tRNA binding site of the peptidyltransferase center. The protein is Large ribosomal subunit protein uL6 of Pseudomonas syringae pv. tomato (strain ATCC BAA-871 / DC3000).